The following is a 345-amino-acid chain: Sesquiterpene synthase GALMADRAFT_104215 (345 aa).

Mg(2+)-binding residues include aspartate 91, asparagine 226, serine 230, and glutamate 234. A DDXXD motif motif is present at residues 91-95; that stretch reads DEFTD. The (2E,6E)-farnesyl diphosphate site is built by arginine 316 and tyrosine 317.

It belongs to the terpene synthase family. The cofactor is Mg(2+).

The catalysed reaction is (2E,6E)-farnesyl diphosphate = beta-gurjunene + diphosphate. Terpene cyclase that catalyzes the cyclization of farnesyl diphosphate (FPP) to beta-gurjunene. The sequence is that of Sesquiterpene synthase GALMADRAFT_104215 from Galerina marginata (strain CBS 339.88).